The following is a 207-amino-acid chain: Pyridoxal 5'-phosphate synthase subunit PdxT (207 aa).

53 to 55 serves as a coordination point for L-glutamine; it reads GES. Residue Cys85 is the Nucleophile of the active site. L-glutamine-binding positions include Arg114 and 143–144; that span reads IR. Residues His184 and Glu186 each act as charge relay system in the active site.

The protein belongs to the glutaminase PdxT/SNO family. As to quaternary structure, in the presence of PdxS, forms a dodecamer of heterodimers. Only shows activity in the heterodimer.

The enzyme catalyses aldehydo-D-ribose 5-phosphate + D-glyceraldehyde 3-phosphate + L-glutamine = pyridoxal 5'-phosphate + L-glutamate + phosphate + 3 H2O + H(+). It catalyses the reaction L-glutamine + H2O = L-glutamate + NH4(+). The protein operates within cofactor biosynthesis; pyridoxal 5'-phosphate biosynthesis. Its function is as follows. Catalyzes the hydrolysis of glutamine to glutamate and ammonia as part of the biosynthesis of pyridoxal 5'-phosphate. The resulting ammonia molecule is channeled to the active site of PdxS. The sequence is that of Pyridoxal 5'-phosphate synthase subunit PdxT from Acidothermus cellulolyticus (strain ATCC 43068 / DSM 8971 / 11B).